The primary structure comprises 197 residues: MKNIAKVTALALGIALASGYASAEEKIAFINAGYIFQHHPDRQAVADKLDAEFKPVAEKLAASKKEVDDKIAAARKKVEAKVAALEKDAPRLRQADIQKRQQEINKLGAAEDAELQKLMQEQDKKVQEFQAQNEKRQAEERGKLLDSIQTATNNLAKAKGYTYVLDANSIVFAVEGKDITEEVLKSIPASEKAQEKK.

The first 23 residues, 1–23 (MKNIAKVTALALGIALASGYASA), serve as a signal peptide directing secretion.

This sequence belongs to the Skp family.

The protein resides in the cell outer membrane. The chain is Outer membrane protein 26 (omp26) from Haemophilus influenzae (strain ATCC 51907 / DSM 11121 / KW20 / Rd).